A 203-amino-acid polypeptide reads, in one-letter code: Dephospho-CoA kinase (203 aa).

The 198-residue stretch at 6-203 (ILGLTGGIGS…FYLTLRGGRA (198 aa)) folds into the DPCK domain. ATP is bound at residue 14 to 19 (GSGKSA).

The protein belongs to the CoaE family.

The protein localises to the cytoplasm. It carries out the reaction 3'-dephospho-CoA + ATP = ADP + CoA + H(+). The protein operates within cofactor biosynthesis; coenzyme A biosynthesis; CoA from (R)-pantothenate: step 5/5. Functionally, catalyzes the phosphorylation of the 3'-hydroxyl group of dephosphocoenzyme A to form coenzyme A. In Pseudomonas aeruginosa (strain ATCC 15692 / DSM 22644 / CIP 104116 / JCM 14847 / LMG 12228 / 1C / PRS 101 / PAO1), this protein is Dephospho-CoA kinase.